The following is a 589-amino-acid chain: L-fucose isomerase (589 aa).

Residues E340 and D364 each act as proton acceptor in the active site. Mn(2+)-binding residues include E340, D364, and H527.

The protein belongs to the L-fucose isomerase family. It depends on Mn(2+) as a cofactor.

Its subcellular location is the cytoplasm. The catalysed reaction is L-fucose = L-fuculose. Its pathway is carbohydrate degradation; L-fucose degradation; L-lactaldehyde and glycerone phosphate from L-fucose: step 1/3. Functionally, converts the aldose L-fucose into the corresponding ketose L-fuculose. The chain is L-fucose isomerase from Haemophilus influenzae (strain PittEE).